The sequence spans 366 residues: Cellular tumor antigen p53 (366 aa).

A transcription activation (acidic) region spans residues Met1–Asp41. Residues Asp80–Thr267 mediate DNA binding. Zn(2+) is bound by residues Cys154, His157, Cys213, and Cys217. Residues Arg248–Arg255 form an interaction with DNA region. A compositionally biased stretch (basic and acidic residues) spans Arg255–Ser264. The disordered stretch occupies residues Arg255–Lys305. A Bipartite nuclear localization signal motif is present at residues Lys275–Lys295. Positions Ala280–Met292 are enriched in polar residues. Positions Lys305–Lys336 are oligomerization. Positions Glu319–Gly330 match the Nuclear export signal motif. The disordered stretch occupies residues Ala332 to Asp366. Residues Val341–Arg362 are basic (repression of DNA-binding).

The protein belongs to the p53 family. As to quaternary structure, binds DNA as a homotetramer. It depends on Zn(2+) as a cofactor.

It is found in the cytoplasm. The protein localises to the nucleus. Its function is as follows. Multifunctional transcription factor that induces cell cycle arrest, DNA repair or apoptosis upon binding to its target DNA sequence. Acts as a tumor suppressor in many tumor types; induces growth arrest or apoptosis depending on the physiological circumstances and cell type. Negatively regulates cell division by controlling expression of a set of genes required for this process. One of the activated genes is an inhibitor of cyclin-dependent kinases. Apoptosis induction seems to be mediated either by stimulation of BAX and FAS antigen expression, or by repression of Bcl-2 expression. The chain is Cellular tumor antigen p53 (tp53) from Platichthys flesus (European flounder).